The following is a 61-amino-acid chain: UPF0434 protein Pfl01_4174 (61 aa).

Belongs to the UPF0434 family.

This Pseudomonas fluorescens (strain Pf0-1) protein is UPF0434 protein Pfl01_4174.